The primary structure comprises 463 residues: ATP synthase subunit beta (463 aa).

151–158 contacts ATP; that stretch reads GGAGVGKT.

This sequence belongs to the ATPase alpha/beta chains family. F-type ATPases have 2 components, CF(1) - the catalytic core - and CF(0) - the membrane proton channel. CF(1) has five subunits: alpha(3), beta(3), gamma(1), delta(1), epsilon(1). CF(0) has three main subunits: a(1), b(2) and c(9-12). The alpha and beta chains form an alternating ring which encloses part of the gamma chain. CF(1) is attached to CF(0) by a central stalk formed by the gamma and epsilon chains, while a peripheral stalk is formed by the delta and b chains.

It localises to the cell membrane. It carries out the reaction ATP + H2O + 4 H(+)(in) = ADP + phosphate + 5 H(+)(out). Functionally, produces ATP from ADP in the presence of a proton gradient across the membrane. The catalytic sites are hosted primarily by the beta subunits. The sequence is that of ATP synthase subunit beta from Clostridium botulinum (strain Okra / Type B1).